The primary structure comprises 320 residues: Phosphate acyltransferase (320 aa).

This sequence belongs to the PlsX family. Homodimer. Probably interacts with PlsY.

It is found in the cytoplasm. The catalysed reaction is a fatty acyl-[ACP] + phosphate = an acyl phosphate + holo-[ACP]. It functions in the pathway lipid metabolism; phospholipid metabolism. Its function is as follows. Catalyzes the reversible formation of acyl-phosphate (acyl-PO(4)) from acyl-[acyl-carrier-protein] (acyl-ACP). This enzyme utilizes acyl-ACP as fatty acyl donor, but not acyl-CoA. The chain is Phosphate acyltransferase from Syntrophomonas wolfei subsp. wolfei (strain DSM 2245B / Goettingen).